Reading from the N-terminus, the 191-residue chain is Lipid A acyltransferase PagP (191 aa).

An N-terminal signal peptide occupies residues 1 to 26; sequence MLKVNKYVILIIAFVSQMMFSTTAQA. Catalysis depends on residues H63, D106, and S107.

This sequence belongs to the lipid A palmitoyltransferase family. In terms of assembly, homodimer.

The protein localises to the cell outer membrane. It catalyses the reaction a lipid A + a 1,2-diacyl-sn-glycero-3-phosphocholine = a hepta-acyl lipid A + a 2-acyl-sn-glycero-3-phosphocholine. The enzyme catalyses a lipid IVA + a 1,2-diacyl-sn-glycero-3-phosphocholine = a lipid IVB + a 2-acyl-sn-glycero-3-phosphocholine. It carries out the reaction a lipid IIA + a 1,2-diacyl-sn-glycero-3-phosphocholine = a lipid IIB + a 2-acyl-sn-glycero-3-phosphocholine. Transfers a fatty acid residue from the sn-1 position of a phospholipid to the N-linked hydroxyfatty acid chain on the proximal unit of lipid A or its precursors. The protein is Lipid A acyltransferase PagP of Enterobacter lignolyticus (strain SCF1).